A 94-amino-acid chain; its full sequence is Co-chaperonin GroES (94 aa).

It belongs to the GroES chaperonin family. Heptamer of 7 subunits arranged in a ring. Interacts with the chaperonin GroEL.

Its subcellular location is the cytoplasm. Functionally, together with the chaperonin GroEL, plays an essential role in assisting protein folding. The GroEL-GroES system forms a nano-cage that allows encapsulation of the non-native substrate proteins and provides a physical environment optimized to promote and accelerate protein folding. GroES binds to the apical surface of the GroEL ring, thereby capping the opening of the GroEL channel. This chain is Co-chaperonin GroES, found in Lactobacillus helveticus (strain DPC 4571).